The following is a 278-amino-acid chain: 4-deoxy-L-threo-5-hexosulose-uronate ketol-isomerase (278 aa).

Residues His-196, His-198, Glu-203, and His-245 each contribute to the Zn(2+) site.

Belongs to the KduI family. In terms of assembly, homohexamer. It depends on Zn(2+) as a cofactor.

The catalysed reaction is 5-dehydro-4-deoxy-D-glucuronate = 3-deoxy-D-glycero-2,5-hexodiulosonate. Its pathway is glycan metabolism; pectin degradation; 2-dehydro-3-deoxy-D-gluconate from pectin: step 4/5. In terms of biological role, catalyzes the isomerization of 5-dehydro-4-deoxy-D-glucuronate to 3-deoxy-D-glycero-2,5-hexodiulosonate. The polypeptide is 4-deoxy-L-threo-5-hexosulose-uronate ketol-isomerase (Escherichia coli (strain SMS-3-5 / SECEC)).